The following is an 859-amino-acid chain: Probable helicase A859L (859 aa).

One can recognise a Helicase ATP-binding domain in the interval Tyr-178–Ala-349. ATP is bound at residue Met-191–Thr-198. Positions Asp-298–His-301 match the DEAH box motif. One can recognise a Helicase C-terminal domain in the interval Gln-394 to Ser-553.

It belongs to the asfivirus helicase A859L family.

The chain is Probable helicase A859L from African swine fever virus (isolate Pig/Kenya/KEN-50/1950) (ASFV).